The following is a 234-amino-acid chain: N-acetyl-alpha-D-glucosaminyl L-malate deacetylase 1 (234 aa).

Zn(2+) is bound by residues His-12, Asp-15, and His-113.

The protein belongs to the PIGL family. The cofactor is Zn(2+).

The enzyme catalyses (S)-malyl N-acetyl-alpha-D-glucosaminide + H2O = (S)-malyl alpha-D-glucosaminide + acetate. With respect to regulation, inhibited by BSH. In terms of biological role, involved in bacillithiol (BSH) biosynthesis. Catalyzes the second step of the pathway, the deacetylation of N-acetylglucosaminylmalate (GlcNAc-Mal) to glucosamine malate (GlcN-Mal). The chain is N-acetyl-alpha-D-glucosaminyl L-malate deacetylase 1 from Bacillus anthracis.